The sequence spans 287 residues: HTH-type transcriptional regulator MurR (287 aa).

An HTH rpiR-type domain is found at 1–77; the sequence is MLYLAKMRNA…MALIEEYSVN (77 aa). Residues 37-56 constitute a DNA-binding region (H-T-H motif); sequence SRNLAKQLEVSQSSIVKFAQ. One can recognise an SIS domain in the interval 128 to 268; it reads VINLISKARL…FVGMVQLNDV (141 aa).

In terms of assembly, homotetramer.

The protein operates within amino-sugar metabolism; N-acetylmuramate degradation [regulation]. In terms of biological role, represses the expression of the murPQ operon involved in the uptake and degradation of N-acetylmuramic acid (MurNAc). Binds to two adjacent inverted repeats within the operator region. MurNAc 6-phosphate, the substrate of MurQ, is the specific inducer that weakens binding of MurR to the operator. This is HTH-type transcriptional regulator MurR from Citrobacter koseri (strain ATCC BAA-895 / CDC 4225-83 / SGSC4696).